Reading from the N-terminus, the 196-residue chain is V-type proton ATPase subunit E (196 aa).

The protein belongs to the V-ATPase E subunit family.

Its function is as follows. Produces ATP from ADP in the presence of a proton gradient across the membrane. This is V-type proton ATPase subunit E from Clostridium botulinum (strain Eklund 17B / Type B).